Reading from the N-terminus, the 185-residue chain is Large ribosomal subunit protein uL5 (185 aa).

It belongs to the universal ribosomal protein uL5 family. Part of the 50S ribosomal subunit; part of the 5S rRNA/L5/L18/L25 subcomplex. Contacts the 5S rRNA and the P site tRNA. Forms a bridge to the 30S subunit in the 70S ribosome.

In terms of biological role, this is one of the proteins that bind and probably mediate the attachment of the 5S RNA into the large ribosomal subunit, where it forms part of the central protuberance. In the 70S ribosome it contacts protein S13 of the 30S subunit (bridge B1b), connecting the 2 subunits; this bridge is implicated in subunit movement. Contacts the P site tRNA; the 5S rRNA and some of its associated proteins might help stabilize positioning of ribosome-bound tRNAs. The protein is Large ribosomal subunit protein uL5 of Phocaeicola vulgatus (strain ATCC 8482 / DSM 1447 / JCM 5826 / CCUG 4940 / NBRC 14291 / NCTC 11154) (Bacteroides vulgatus).